Here is a 1447-residue protein sequence, read N- to C-terminus: Adhesion G protein-coupled receptor L3 (1447 aa).

The N-terminal stretch at 1–19 is a signal peptide; the sequence is MWPSQLLIFMMLLAPIIHA. Over 20–862 the chain is Extracellular; sequence FSRAPIPMAV…VKHSDAVHDL (843 aa). The SUEL-type lectin domain occupies 35 to 124; that stretch reads SCESYPIELR…KYLEVQYECV (90 aa). 5 disulfide bridges follow: Cys36/Cys66, Cys45/Cys123, Cys78/Cys110, Cys91/Cys97, and Cys135/Cys317. A glycan (N-linked (GlcNAc...) asparagine) is linked at Asn93. One can recognise an Olfactomedin-like domain in the interval 134–393; it reads LCPGLLKGVY…VVKYSLDFGP (260 aa). The segment at 249–279 is interaction with FLRT3; sequence YHDTSPYRWGGKSDIDLAVDENGLWVIYATE. Ca(2+) is bound by residues Asp264, Asn312, Ala313, and Val367. The segment at 426 to 473 is disordered; the sequence is DISTTGPLGMGSTTTSTTLRTTTLSPGRSTTPSVSGRRNRSTSTPSPA. Positions 428–458 are enriched in low complexity; it reads STTGPLGMGSTTTSTTLRTTTLSPGRSTTPS. Residues Asn464, Asn549, Asn746, Asn759, Asn804, and Asn830 are each glycosylated (N-linked (GlcNAc...) asparagine). In terms of domain architecture, GAIN-B spans 675–854; it reads DIVRENTDNI…AVLMAHVEVK (180 aa). Cystine bridges form between Cys805–Cys836 and Cys824–Cys838. The GPS stretch occupies residues 805-854; it reads CSFWSYSKRTMTGYWSTQGCRLLTTNKTHTTCSCNHLTNFAVLMAHVEVK. The tract at residues 842–855 is stachel; it reads TNFAVLMAHVEVKH. Residues 863 to 888 form a helical membrane-spanning segment; it reads LLDVITWVGILLSLVCLLICIFTFCF. Residues 889–896 lie on the Cytoplasmic side of the membrane; the sequence is FRGLQSDR. Residues 897–918 traverse the membrane as a helical segment; that stretch reads NTIHKNLCISLFVAELLFLIGI. The Extracellular segment spans residues 919 to 926; sequence NRTDQPIA. Residues 927 to 950 form a helical membrane-spanning segment; it reads CAVFAALLHFFFLAAFTWMFLEGV. Cys927 and Cys999 are oxidised to a cystine. The Cytoplasmic segment spans residues 951–967; the sequence is QLYIMLVEVFESEHSRR. Residues 968-990 form a helical membrane-spanning segment; the sequence is KYFYLVGYGMPALIVAVSAAVDY. The Extracellular portion of the chain corresponds to 991–1005; the sequence is RSYGTDKVCWLRLDT. A helical membrane pass occupies residues 1006–1027; the sequence is YFIWSFIGPATLIIMLNVIFLG. At 1028–1053 the chain is on the cytoplasmic side; the sequence is IALYKMFHHTAILKPESGCLDNIKSW. The helical transmembrane segment at 1054–1073 threads the bilayer; that stretch reads VIGAIALLCLLGLTWAFGLM. Over 1074–1078 the chain is Extracellular; the sequence is YINES. The N-linked (GlcNAc...) asparagine glycan is linked to Asn1076. A helical membrane pass occupies residues 1079–1104; sequence TVIMAYLFTIFNSLQGMFIFIFHCVL. The Cytoplasmic portion of the chain corresponds to 1105–1447; sequence QKKVRKEYGK…KGPAHLVTSL (343 aa). The interval 1123–1147 is disordered; that stretch reads GKSTESSIGSGKTSGSRTPGRYSTG. At Ser1164 the chain carries Phosphoserine. Residues 1423 to 1447 form a disordered region; the sequence is IVPPNKDGTPPEGSSKGPAHLVTSL. Residues 1442–1447 carry the PDZ-binding motif; the sequence is HLVTSL.

The protein belongs to the G-protein coupled receptor 2 family. LN-TM7 subfamily. As to quaternary structure, heterodimer of 2 chains generated by proteolytic processing; the large extracellular N-terminal fragment and the membrane-bound C-terminal fragment predominantly remain associated and non-covalently linked. Interacts (via olfactomedin-like domain) with FLRT1 (via extracellular domain). Interacts (via olfactomedin-like domain) with FLRT2 (via extracellular domain). Interacts (via olfactomedin-like domain) with FLRT3 (via extracellular domain); the interaction is direct. Interacts (via extracellular domain) with TENM1. Interacts (via extracellular domain) with TENM2. Interacts (via extracellular domain) with TENM3. Identified in a complex with FLRT3 and UNC5B; does not interact with UNC5B by itself. Identified in a complex with FLRT3 and UNC5D; does not interact with UNC5D by itself. In terms of assembly, interacts (via PDZ-binding motif) with SHANK3. Interacts (via PDZ-binding motif) with DLG4. Post-translationally, autoproteolytically processed at the GPS region of the GAIN-B domain; this cleavage modulates receptor activity.

It is found in the cell membrane. The protein resides in the postsynaptic cell membrane. Its subcellular location is the cell projection. The protein localises to the axon. It localises to the cell junction. Forms a heterodimer of 2 chains generated by proteolytic processing that remain associated through non-covalent interactions mediated by the GAIN-B domain. In the inactivated receptor, the Stachel sequence (also named stalk) is embedded in the GAIN-B domain, where it adopts a beta-strand conformation. On activation, the Stachel moves into the 7 transmembrane region and adopts a twisted hook-shaped configuration that forms contacts within the receptor, leading to coupling of a G-alpha protein, which activates signaling. The cleaved GAIN-B and N-terminal domains can then dissociate from the rest of the receptor. Its function is as follows. Orphan adhesion G-protein coupled receptor (aGPCR), which mediates synapse specificity. Ligand binding causes a conformation change that triggers signaling via guanine nucleotide-binding proteins (G proteins) and modulates the activity of downstream effectors. ADGRL3 is coupled with different classes of G alpha proteins, such as G(12)/G(13), G(s), G(i) or G(q), depending on the context. Coupling to G(12)/G(13) G proteins, which mediates the activation Rho small GTPases is the most efficient. Following G-protein coupled receptor activation, associates with cell adhesion molecules that are expressed at the surface of adjacent cells to direct synapse specificity. Specifically mediates the establishment of Schaffer-collateral synapses formed by CA3-region axons on CA1-region pyramidal neurons in the hippocampus. Localizes to postsynaptic spines in excitatory synapses in the S.oriens and S.radiatum and interacts with presynaptic cell adhesion molecules FLRT3 and TENM2, promoting synapse formation. Plays a role in the development of glutamatergic synapses in the cortex. Important in determining the connectivity rates between the principal neurons in the cortex. Functionally, orphan adhesion G-protein coupled receptor (aGPCR), which mediates synapse specificity. Ligand binding causes a conformation change that triggers signaling via guanine nucleotide-binding proteins (G proteins) and modulates the activity of downstream effectors, such as adenylate cyclase. Isoform 1 is specifically coupled to G(s) G proteins and mediates activation of adenylate cyclase activity. Following G-protein coupled receptor activation, undergoes liquid-liquid phase transition, associates with (1) cell adhesion molecules that are expressed at the surface of adjacent cells, as well as (2) PDZ-containing proteins, such as SHANK3 and DLG4, in the cytoplasm to direct synapse formation. This chain is Adhesion G protein-coupled receptor L3, found in Homo sapiens (Human).